The sequence spans 134 residues: Protein E6 (134 aa).

2 zinc fingers span residues 15-51 (CLQCKKALGSLDALKCKNHKYRRVHRGGKPYGMCQIC) and 88-124 (CYYCGCVLSDSEKDRHALDHEGYLYVRGRARGRCYSC).

The protein belongs to the papillomaviridae E6 protein family. In terms of assembly, forms homodimers. Interacts with ubiquitin-protein ligase UBE3A/E6-AP; this interaction stimulates UBE3A ubiquitin activity. Interacts with host BAK1.

The protein resides in the host cytoplasm. It localises to the host nucleus. Functionally, plays a major role in the induction and maintenance of cellular transformation. E6 associates with host UBE3A/E6-AP ubiquitin-protein ligase and modulates its activity. Protects host keratinocytes from apoptosis by mediating the degradation of host BAK1. May also inhibit host immune response. In Bos taurus (Bovine), this protein is Protein E6.